A 159-amino-acid chain; its full sequence is Ribosomal RNA large subunit methyltransferase H (159 aa).

Positions 76 and 108 each coordinate S-adenosyl-L-methionine.

This sequence belongs to the RNA methyltransferase RlmH family. In terms of assembly, homodimer.

Its subcellular location is the cytoplasm. The catalysed reaction is pseudouridine(1915) in 23S rRNA + S-adenosyl-L-methionine = N(3)-methylpseudouridine(1915) in 23S rRNA + S-adenosyl-L-homocysteine + H(+). Its function is as follows. Specifically methylates the pseudouridine at position 1915 (m3Psi1915) in 23S rRNA. This is Ribosomal RNA large subunit methyltransferase H from Levilactobacillus brevis (strain ATCC 367 / BCRC 12310 / CIP 105137 / JCM 1170 / LMG 11437 / NCIMB 947 / NCTC 947) (Lactobacillus brevis).